A 226-amino-acid polypeptide reads, in one-letter code: UPF0758 protein GTNG_2548 (226 aa).

An MPN domain is found at Val-104–Val-226. His-175, His-177, and Asp-188 together coordinate Zn(2+). The short motif at His-175 to Asp-188 is the JAMM motif element.

It belongs to the UPF0758 family.

In Geobacillus thermodenitrificans (strain NG80-2), this protein is UPF0758 protein GTNG_2548.